Consider the following 307-residue polypeptide: Dihydroorotate dehydrogenase B (NAD(+)), catalytic subunit (307 aa).

FMN-binding positions include Ser22 and 46 to 47; that span reads KA. Substrate contacts are provided by residues Lys46 and 70 to 74; that span reads NAIGL. FMN contacts are provided by Asn102 and Asn130. Asn130 is a binding site for substrate. Cys133 acts as the Nucleophile in catalysis. FMN is bound by residues Lys168 and Ile194. 195 to 196 is a binding site for substrate; sequence NT. FMN-binding positions include Gly220, 246–247, and 268–269; these read GG and GT.

The protein belongs to the dihydroorotate dehydrogenase family. Type 1 subfamily. Heterotetramer of 2 PyrK and 2 PyrD type B subunits. It depends on FMN as a cofactor.

Its subcellular location is the cytoplasm. The enzyme catalyses (S)-dihydroorotate + NAD(+) = orotate + NADH + H(+). The protein operates within pyrimidine metabolism; UMP biosynthesis via de novo pathway; orotate from (S)-dihydroorotate (NAD(+) route): step 1/1. In terms of biological role, catalyzes the conversion of dihydroorotate to orotate with NAD(+) as electron acceptor. This chain is Dihydroorotate dehydrogenase B (NAD(+)), catalytic subunit (pyrD), found in Latilactobacillus sakei subsp. sakei (strain 23K) (Lactobacillus sakei subsp. sakei).